The primary structure comprises 257 residues: 3-methyl-2-oxobutanoate hydroxymethyltransferase (257 aa).

Mg(2+) contacts are provided by Asp-42 and Asp-86. 3-methyl-2-oxobutanoate-binding positions include 42-43, Asp-86, and Lys-116; that span reads DS. Mg(2+) is bound at residue Glu-118. Glu-185 serves as the catalytic Proton acceptor.

The protein belongs to the PanB family. As to quaternary structure, homodecamer; pentamer of dimers. Mg(2+) serves as cofactor.

The protein localises to the cytoplasm. The enzyme catalyses 3-methyl-2-oxobutanoate + (6R)-5,10-methylene-5,6,7,8-tetrahydrofolate + H2O = 2-dehydropantoate + (6S)-5,6,7,8-tetrahydrofolate. It functions in the pathway cofactor biosynthesis; (R)-pantothenate biosynthesis; (R)-pantoate from 3-methyl-2-oxobutanoate: step 1/2. Functionally, catalyzes the reversible reaction in which hydroxymethyl group from 5,10-methylenetetrahydrofolate is transferred onto alpha-ketoisovalerate to form ketopantoate. In Prochlorococcus marinus (strain MIT 9312), this protein is 3-methyl-2-oxobutanoate hydroxymethyltransferase.